We begin with the raw amino-acid sequence, 216 residues long: Somatotropin (216 aa).

Residues 1 to 26 form the signal peptide; it reads MAAGPRTSVLLAFALLCLPWTQEVGA. His-45 provides a ligand contact to Zn(2+). Cys-78 and Cys-189 are oxidised to a cystine. Position 131 is a phosphoserine (Ser-131). Zn(2+) is bound at residue Glu-198. Residues Cys-206 and Cys-214 are joined by a disulfide bond.

Belongs to the somatotropin/prolactin family.

The protein resides in the secreted. Functionally, plays an important role in growth control. Its major role in stimulating body growth is to stimulate the liver and other tissues to secrete IGF1. It stimulates both the differentiation and proliferation of myoblasts. It also stimulates amino acid uptake and protein synthesis in muscle and other tissues. This is Somatotropin (GH1) from Hippopotamus amphibius (Hippopotamus).